The primary structure comprises 998 residues: Collagen alpha-1(I) chain (998 aa).

A disordered region spans residues 1-998 (GGVSVPGPMG…PGPPGPPGPP (998 aa)). 9 positions are modified to 4-hydroxyproline: Pro18, Pro21, Pro24, Pro33, Pro48, Pro63, Pro69, Pro78, and Pro84. Residues 26–39 (PQGFQGPPGSSGPM) are compositionally biased toward low complexity. The span at 51–65 (NGDDGEAGKPGRPGE) shows a compositional bias: basic and acidic residues. At Lys87 the chain carries 5-hydroxylysine; alternate. Lys87 carries an O-linked (Gal...) hydroxylysine; alternate glycan. Residue Ser93 is modified to Phosphoserine. Over residues 101–115 (DAGPAGPKQMGPRGL) the composition is skewed to low complexity. Pro116, Pro122, Pro143, Pro152, Pro155, Pro182, Pro185, Pro197, Pro203, Pro212, Pro218, Pro221, and Pro236 each carry 4-hydroxyproline. Over residues 122–140 (PGASGPAGARGNDGATGAA) the composition is skewed to low complexity. Over residues 142 to 154 (PPGPTGPAGPPGF) the composition is skewed to pro residues. The segment covering 188–238 (AGAAGPAGNPGADGQPGAKGANGAPGIAGAPGFPGARGPSGPQGPSGAPGP) has biased composition (low complexity). Lys239 bears the 5-hydroxylysine mark. 4-hydroxyproline is present on residues Pro245, Pro248, Pro260, Pro269, Pro284, Pro290, Pro299, and Pro305. The segment covering 294-303 (GERGGPGSRG) has biased composition (gly residues). Lys314 carries the 5-hydroxylysine modification. 28 positions are modified to 4-hydroxyproline: Pro323, Pro332, Pro338, Pro344, Pro353, Pro356, Pro365, Pro374, Pro380, Pro392, Pro401, Pro410, Pro413, Pro431, Pro449, Pro455, Pro461, Pro467, Pro473, Pro479, Pro491, Pro500, Pro511, Pro523, Pro526, Pro532, Pro538, and Pro547. The segment covering 347–401 (KGLTGSPGSPGPDGKTGPPGPAGQDGRPGPAGPPGARGQAGVMGFPGPKGAAGEP) has biased composition (low complexity). Residues 443 to 470 (QGPAGSPGFQGLPGPAGPPGEAGKPGEQ) show a composition bias toward low complexity. A compositionally biased stretch (low complexity) spans 513–535 (NDGAKGDAGAPGAPGSQGAPGLQ). Lys559 is subject to 5-hydroxylysine. 2 positions are modified to 4-hydroxyproline: Pro565 and Pro580. The span at 592–606 (TGPSGPAGPTGARGA) shows a compositional bias: low complexity. At Ser595 the chain carries Phosphoserine. Residues Pro607, Pro613, Pro616, Pro625, Pro631, Pro649, Pro658, and Pro667 each carry the 4-hydroxyproline modification. The span at 619–646 (AGFAGPPGADGQPGAKGEPGDAGAKGDA) shows a compositional bias: low complexity. The segment covering 648–660 (PPGPAGPTGPPGP) has biased composition (pro residues). Lys670 bears the 5-hydroxylysine mark. The segment covering 675-691 (SAGPPGATGFPGAAGRV) has biased composition (low complexity). Residues Pro679 and Pro685 each carry the 4-hydroxyproline modification. Pro693 bears the 3-hydroxyproline mark. Pro694, Pro703, Pro706, Pro727, Pro736, Pro744, Pro753, Pro771, Pro780, Pro783, Pro789, Pro804, Pro810, Pro816, Pro825, and Pro831 each carry 4-hydroxyproline. Residues 720 to 729 (ETGPAGRPGE) are compositionally biased toward low complexity. Over residues 741–762 (KGSPGADGPAGAPGTPGPQGIA) the composition is skewed to low complexity. Over residues 803-813 (PPGPMGPPGLA) the composition is skewed to pro residues. Over residues 815–830 (PPGEAGREGSPGAEGS) the composition is skewed to low complexity. The residue at position 840 (Lys840) is a 5-hydroxylysine. Pro residues predominate over residues 848-863 (PGPPGAPGAPGAPGPV). A 4-hydroxyproline mark is found at Pro851, Pro854, and Pro857. Residues 884–898 (AGPAGARGPAGPQGP) show a composition bias toward low complexity. Residues 899-913 (RGDKGETGEQGDRGI) show a composition bias toward basic and acidic residues. Residue Lys902 is modified to 5-hydroxylysine. A 5-hydroxylysine; alternate modification is found at Lys914. Lys914 carries O-linked (Gal...) hydroxylysine; alternate glycosylation. 4-hydroxyproline occurs at positions 929, 932, 950, and 965. Over residues 932–965 (PGEQGPSGASGPAGPRGPPGSAGTPGKDGLNGLP) the composition is skewed to low complexity. Residue Pro970 is modified to 3-hydroxyproline. Pro971 bears the 4-hydroxyproline mark. The segment covering 983-998 (VGPPGPPGPPGPPGPP) has biased composition (pro residues). Pro985 bears the 3-hydroxyproline mark. 4-hydroxyproline is present on Pro986. Pro988 carries the 3-hydroxyproline modification. Pro989 bears the 4-hydroxyproline mark. Pro991 bears the 3-hydroxyproline mark. 4-hydroxyproline occurs at positions 992, 995, and 998.

The protein belongs to the fibrillar collagen family. As to quaternary structure, trimers of one alpha 2(I) and two alpha 1(I) chains. Contains mostly 4-hydroxyproline. Proline residues at the third position of the tripeptide repeating unit (G-X-Y) are hydroxylated in some or all of the chains. In terms of processing, contains 3-hydroxyproline at a few sites. This modification occurs on the first proline residue in the sequence motif Gly-Pro-Hyp, where Hyp is 4-hydroxyproline. Post-translationally, lysine residues at the third position of the tripeptide repeating unit (G-X-Y) are 5-hydroxylated in some or all of the chains. O-glycosylated on hydroxylated lysine residues. The O-linked glycan consists of a Glc-Gal disaccharide. In terms of tissue distribution, expressed in bones.

The protein resides in the secreted. It localises to the extracellular space. The protein localises to the extracellular matrix. Its function is as follows. Type I collagen is a member of group I collagen (fibrillar forming collagen). The sequence is that of Collagen alpha-1(I) chain from Glyptodon sp. (strain SLP-2019) (Giant armadillo).